Consider the following 452-residue polypeptide: Translation initiation factor eIF2B subunit gamma (452 aa).

Methionine 1 carries the N-acetylmethionine modification. Phosphoserine is present on serine 260.

Belongs to the eIF-2B gamma/epsilon subunits family. As to quaternary structure, component of the translation initiation factor 2B (eIF2B) complex which is a heterodecamer of two sets of five different subunits: alpha, beta, gamma, delta and epsilon. Subunits alpha, beta and delta comprise a regulatory subcomplex and subunits epsilon and gamma comprise a catalytic subcomplex. Within the complex, the hexameric regulatory complex resides at the center, with the two heterodimeric catalytic subcomplexes bound on opposite sides.

The protein resides in the cytoplasm. It is found in the cytosol. Its activity is regulated as follows. Activated by the chemical integrated stress response (ISR) inhibitor ISRIB which stimulates guanine nucleotide exchange factor activity for both phosphorylated and unphosphorylated eIF2. Its function is as follows. Acts as a component of the translation initiation factor 2B (eIF2B) complex, which catalyzes the exchange of GDP for GTP on the eukaryotic initiation factor 2 (eIF2) complex gamma subunit. Its guanine nucleotide exchange factor activity is repressed when bound to eIF2 complex phosphorylated on the alpha subunit, thereby limiting the amount of methionyl-initiator methionine tRNA available to the ribosome and consequently global translation is repressed. In Macaca fascicularis (Crab-eating macaque), this protein is Translation initiation factor eIF2B subunit gamma (EIF2B3).